Here is a 195-residue protein sequence, read N- to C-terminus: Imidazoleglycerol-phosphate dehydratase (195 aa).

This sequence belongs to the imidazoleglycerol-phosphate dehydratase family.

The protein resides in the cytoplasm. The enzyme catalyses D-erythro-1-(imidazol-4-yl)glycerol 3-phosphate = 3-(imidazol-4-yl)-2-oxopropyl phosphate + H2O. The protein operates within amino-acid biosynthesis; L-histidine biosynthesis; L-histidine from 5-phospho-alpha-D-ribose 1-diphosphate: step 6/9. This is Imidazoleglycerol-phosphate dehydratase from Burkholderia pseudomallei (strain 1710b).